Consider the following 329-residue polypeptide: Methionyl-tRNA formyltransferase (329 aa).

A (6S)-5,6,7,8-tetrahydrofolate-binding site is contributed by 118–121 (SLLP).

This sequence belongs to the Fmt family.

It catalyses the reaction L-methionyl-tRNA(fMet) + (6R)-10-formyltetrahydrofolate = N-formyl-L-methionyl-tRNA(fMet) + (6S)-5,6,7,8-tetrahydrofolate + H(+). In terms of biological role, attaches a formyl group to the free amino group of methionyl-tRNA(fMet). The formyl group appears to play a dual role in the initiator identity of N-formylmethionyl-tRNA by promoting its recognition by IF2 and preventing the misappropriation of this tRNA by the elongation apparatus. The protein is Methionyl-tRNA formyltransferase of Corynebacterium urealyticum (strain ATCC 43042 / DSM 7109).